A 348-amino-acid chain; its full sequence is Outer membrane protein A (348 aa).

The N-terminal stretch at 1–21 (MKKTAIAIAVALAGFATVAQA) is a signal peptide. Transmembrane regions (beta stranded) follow at residues 27–37 (TWYTGAKLGWS), 55–66 (QLGAGAFGGYQV), 70–78 (VGFEMGYDW), 96–107 (QGVQLTAKLGYP), 112–120 (LDIYTRLGG), 146–155 (PVFAGGVEYA), 160–167 (IATRLEYQ), and 186–194 (LLSLGVSYR). The interval 201 to 210 (APVVAPAPAP) is hinge-like. A run of 3 repeats spans residues 205 to 206 (AP), 207 to 208 (AP), and 209 to 210 (AP). The segment at 205–210 (APAPAP) is 3 X 2 AA tandem repeats of A-P. The 129-residue stretch at 212-340 (VQTKHFTLKS…RVEIEVKGIK (129 aa)) folds into the OmpA-like domain. An intrachain disulfide couples Cys-313 to Cys-325.

It belongs to the outer membrane OOP (TC 1.B.6) superfamily. OmpA family. As to quaternary structure, monomer and homodimer. (Microbial infection) Upon infection with phage Sf6 associates with the mature bacteriophage capsid. Was originally suggested to be within the bacteriophage capsid. This has been disproven.

It localises to the extracellular vesicle. It is found in the cell outer membrane. In terms of biological role, with TolR probably plays a role in maintaining the position of the peptidoglycan cell wall in the periplasm. Acts as a porin with low permeability that allows slow penetration of small solutes; an internal gate slows down solute passage. Its function is as follows. Required for conjugation with F-type plasmids; probably serves as the mating receptor on recipient cells. Functionally, (Microbial infection) Serves as a secondary receptor during phage Sf6 infection; infection requires both lipopolysaccharide (LPS) and the OmpA beta-barrel. In Shigella flexneri, this protein is Outer membrane protein A.